We begin with the raw amino-acid sequence, 209 residues long: Dual-specificity protein phosphatase SDP1 (209 aa).

The span at 1 to 11 (MNIYTSPTRTP) shows a compositional bias: polar residues. A disordered region spans residues 1–43 (MNIYTSPTRTPNIAPKSGQRPSLPMLATDERSTDKESPNEDRE). Residues 28–43 (TDERSTDKESPNEDRE) show a composition bias toward basic and acidic residues. A disulfide bond links C47 and C142. In terms of domain architecture, Tyrosine-protein phosphatase spans 59-196 (GPLLVLPEKI…LMEWEVALNA (138 aa)). H111 contributes to the 4-O-phospho-L-tyrosine binding site. The active-site Phosphocysteine intermediate is C140.

Belongs to the protein-tyrosine phosphatase family. Non-receptor class dual specificity subfamily.

It carries out the reaction O-phospho-L-tyrosyl-[protein] + H2O = L-tyrosyl-[protein] + phosphate. Mediates dephosphorylation of MAPK substrates such as SLT2, acquiring enhanced catalytic activity under oxidative conditions. This is Dual-specificity protein phosphatase SDP1 (SDP1) from Saccharomyces cerevisiae (strain ATCC 204508 / S288c) (Baker's yeast).